The primary structure comprises 644 residues: 1,4-alpha-glucan branching enzyme GlgB (644 aa).

The active-site Nucleophile is D309. Catalysis depends on E362, which acts as the Proton donor.

Belongs to the glycosyl hydrolase 13 family. GlgB subfamily. In terms of assembly, monomer.

The catalysed reaction is Transfers a segment of a (1-&gt;4)-alpha-D-glucan chain to a primary hydroxy group in a similar glucan chain.. It participates in glycan biosynthesis; glycogen biosynthesis. In terms of biological role, catalyzes the formation of the alpha-1,6-glucosidic linkages in glycogen by scission of a 1,4-alpha-linked oligosaccharide from growing alpha-1,4-glucan chains and the subsequent attachment of the oligosaccharide to the alpha-1,6 position. This Cutibacterium acnes (strain DSM 16379 / KPA171202) (Propionibacterium acnes) protein is 1,4-alpha-glucan branching enzyme GlgB.